A 77-amino-acid chain; its full sequence is UPF0401 protein ECP_3853 (77 aa).

The protein belongs to the UPF0401 family.

The sequence is that of UPF0401 protein ECP_3853 from Escherichia coli O6:K15:H31 (strain 536 / UPEC).